The primary structure comprises 90 residues: UPF0335 protein R02793 (90 aa).

This sequence belongs to the UPF0335 family.

This is UPF0335 protein R02793 from Rhizobium meliloti (strain 1021) (Ensifer meliloti).